A 164-amino-acid chain; its full sequence is CB1 cannabinoid receptor-interacting protein 1 (164 aa).

The protein belongs to the CNRIP family. In terms of assembly, interacts with the cannabinoid receptor CNR1 (via C-terminus). Does not interact with cannabinoid receptor CNR2.

In terms of biological role, suppresses cannabinoid receptor CNR1-mediated tonic inhibition of voltage-gated calcium channels. In Rattus norvegicus (Rat), this protein is CB1 cannabinoid receptor-interacting protein 1 (Cnrip1).